Reading from the N-terminus, the 473-residue chain is Siroheme synthase (473 aa).

The precorrin-2 dehydrogenase /sirohydrochlorin ferrochelatase stretch occupies residues 1–203; that stretch reads MQYLPIFTKL…GDTQAAEQQL (203 aa). Residues 22–23 and 43–44 contribute to the NAD(+) site; these read DV and PK. At S128 the chain carries Phosphoserine. Residues 215–473 form a uroporphyrinogen-III C-methyltransferase region; sequence GEVYVVGAGP…SFAQPLTDVA (259 aa). An S-adenosyl-L-methionine-binding site is contributed by P224. Catalysis depends on D247, which acts as the Proton acceptor. The active-site Proton donor is the K269. Residues 300-302, I305, 330-331, M382, and G411 each bind S-adenosyl-L-methionine; these read GGD and TA.

This sequence in the N-terminal section; belongs to the precorrin-2 dehydrogenase / sirohydrochlorin ferrochelatase family. The protein in the C-terminal section; belongs to the precorrin methyltransferase family.

It carries out the reaction uroporphyrinogen III + 2 S-adenosyl-L-methionine = precorrin-2 + 2 S-adenosyl-L-homocysteine + H(+). The enzyme catalyses precorrin-2 + NAD(+) = sirohydrochlorin + NADH + 2 H(+). The catalysed reaction is siroheme + 2 H(+) = sirohydrochlorin + Fe(2+). It functions in the pathway cofactor biosynthesis; adenosylcobalamin biosynthesis; precorrin-2 from uroporphyrinogen III: step 1/1. Its pathway is cofactor biosynthesis; adenosylcobalamin biosynthesis; sirohydrochlorin from precorrin-2: step 1/1. The protein operates within porphyrin-containing compound metabolism; siroheme biosynthesis; precorrin-2 from uroporphyrinogen III: step 1/1. It participates in porphyrin-containing compound metabolism; siroheme biosynthesis; siroheme from sirohydrochlorin: step 1/1. It functions in the pathway porphyrin-containing compound metabolism; siroheme biosynthesis; sirohydrochlorin from precorrin-2: step 1/1. In terms of biological role, multifunctional enzyme that catalyzes the SAM-dependent methylations of uroporphyrinogen III at position C-2 and C-7 to form precorrin-2 via precorrin-1. Then it catalyzes the NAD-dependent ring dehydrogenation of precorrin-2 to yield sirohydrochlorin. Finally, it catalyzes the ferrochelation of sirohydrochlorin to yield siroheme. This is Siroheme synthase from Pseudoalteromonas translucida (strain TAC 125).